The chain runs to 236 residues: Protein N-lysine methyltransferase METTL21A (236 aa).

Residues Trp-47, Gly-73 to Gly-75, Asp-112, Trp-143, and Ala-161 contribute to the S-adenosyl-L-methionine site.

The protein belongs to the methyltransferase superfamily. METTL21 family. As to quaternary structure, interacts with heat shock 70 family members; at least some of these proteins are methylation substrates.

Its subcellular location is the cytoplasm. The catalysed reaction is L-lysyl-[protein] + 3 S-adenosyl-L-methionine = N(6),N(6),N(6)-trimethyl-L-lysyl-[protein] + 3 S-adenosyl-L-homocysteine + 3 H(+). Its function is as follows. Protein-lysine methyltransferase that selectively trimethylates residues in heat shock protein 70 (HSP70) family members. Contributes to the in vivo trimethylation of Lys residues in HSPA1 and HSPA8. In vitro methylates 'Lys-561' in HSPA1, 'Lys-564' in HSPA2, 'Lys-585' in HSPA5, 'Lys-563' in HSPA6 and 'Lys-561' in HSPA8. The polypeptide is Protein N-lysine methyltransferase METTL21A (METTL21A) (Pongo abelii (Sumatran orangutan)).